Consider the following 499-residue polypeptide: Lysine--tRNA ligase (499 aa).

Residues Glu-410 and Glu-417 each coordinate Mg(2+).

It belongs to the class-II aminoacyl-tRNA synthetase family. In terms of assembly, homodimer. Requires Mg(2+) as cofactor.

The protein localises to the cytoplasm. It carries out the reaction tRNA(Lys) + L-lysine + ATP = L-lysyl-tRNA(Lys) + AMP + diphosphate. The polypeptide is Lysine--tRNA ligase (lysS) (Bacillus subtilis (strain 168)).